Reading from the N-terminus, the 569-residue chain is Urease subunit alpha (569 aa).

Residues 131-569 (GAIDSHIHFI…LPLAQRYLLL (439 aa)) enclose the Urease domain. Ni(2+) is bound by residues His136, His138, and Lys219. Residue Lys219 is modified to N6-carboxylysine. His221 contacts substrate. The Ni(2+) site is built by His248 and His274. His322 functions as the Proton donor in the catalytic mechanism. Asp362 serves as a coordination point for Ni(2+).

It belongs to the metallo-dependent hydrolases superfamily. Urease alpha subunit family. In terms of assembly, heterotrimer of UreA (gamma), UreB (beta) and UreC (alpha) subunits. Three heterotrimers associate to form the active enzyme. It depends on Ni cation as a cofactor. Post-translationally, carboxylation allows a single lysine to coordinate two nickel ions.

The protein localises to the cytoplasm. The enzyme catalyses urea + 2 H2O + H(+) = hydrogencarbonate + 2 NH4(+). It participates in nitrogen metabolism; urea degradation; CO(2) and NH(3) from urea (urease route): step 1/1. The polypeptide is Urease subunit alpha (Prochlorococcus marinus (strain NATL2A)).